Consider the following 750-residue polypeptide: Photosystem I P700 chlorophyll a apoprotein A1 (750 aa).

8 helical membrane-spanning segments follow: residues 70–93 (VFSAHFGQLSIIFLWLSGMYFHGA), 156–179 (LYCTAIGALVFAALMLFAGWFHYH), 195–219 (LNHHLAGLLGLGSLSWAGHQVHVSL), 291–309 (IAHHHLAIAILFLIAGHMY), 346–369 (WHAQLSLNLAMLGSLTIVVAHHMY), 385–411 (LSLFTHHMWIGGFLIVGAAAHAAIFMV), 433–455 (AIISHLNWVCIFLGFHSFGLYIH), and 531–549 (FLVHHIHAFTIHVTVLILL). [4Fe-4S] cluster-binding residues include Cys573 and Cys582. 2 helical membrane-spanning segments follow: residues 589–610 (HVFLGLFWMYNAISVVIFHFSW) and 664–686 (LSAYGLFFLGAHFVWAFSLMFLF). His675 serves as a coordination point for chlorophyll a'. Chlorophyll a is bound by residues Met683 and Tyr691. Trp692 serves as a coordination point for phylloquinone. Residues 724-744 (AVGVTHYLLGGIATTWAFFLA) traverse the membrane as a helical segment.

Belongs to the PsaA/PsaB family. The PsaA/B heterodimer binds the P700 chlorophyll special pair and subsequent electron acceptors. PSI consists of a core antenna complex that captures photons, and an electron transfer chain that converts photonic excitation into a charge separation. The eukaryotic PSI reaction center is composed of at least 11 subunits. P700 is a chlorophyll a/chlorophyll a' dimer, A0 is one or more chlorophyll a, A1 is one or both phylloquinones and FX is a shared 4Fe-4S iron-sulfur center. serves as cofactor.

The protein resides in the plastid. It localises to the chloroplast thylakoid membrane. The catalysed reaction is reduced [plastocyanin] + hnu + oxidized [2Fe-2S]-[ferredoxin] = oxidized [plastocyanin] + reduced [2Fe-2S]-[ferredoxin]. Functionally, psaA and PsaB bind P700, the primary electron donor of photosystem I (PSI), as well as the electron acceptors A0, A1 and FX. PSI is a plastocyanin-ferredoxin oxidoreductase, converting photonic excitation into a charge separation, which transfers an electron from the donor P700 chlorophyll pair to the spectroscopically characterized acceptors A0, A1, FX, FA and FB in turn. Oxidized P700 is reduced on the lumenal side of the thylakoid membrane by plastocyanin. This is Photosystem I P700 chlorophyll a apoprotein A1 from Aethionema cordifolium (Lebanon stonecress).